The following is a 103-amino-acid chain: Small ribosomal subunit protein eS25 (103 aa).

Positions 1 to 23 are disordered; sequence MGGEDMAKKKAPSAKEGEKQQGF.

The protein belongs to the eukaryotic ribosomal protein eS25 family.

This Aeropyrum pernix (strain ATCC 700893 / DSM 11879 / JCM 9820 / NBRC 100138 / K1) protein is Small ribosomal subunit protein eS25 (rps25e).